Consider the following 444-residue polypeptide: Probable ribonuclease FAU-1 (444 aa).

The protein belongs to the FAU-1 family.

Functionally, probable RNase involved in rRNA stability through maturation and/or degradation of precursor rRNAs. Binds to RNA in loop regions with AU-rich sequences. This is Probable ribonuclease FAU-1 from Pyrobaculum arsenaticum (strain DSM 13514 / JCM 11321 / PZ6).